A 375-amino-acid chain; its full sequence is Succinyl-diaminopimelate desuccinylase (375 aa).

H66 is a binding site for Zn(2+). D68 is a catalytic residue. A Zn(2+)-binding site is contributed by D99. E133 acts as the Proton acceptor in catalysis. Zn(2+) is bound by residues E134, E162, and H348.

This sequence belongs to the peptidase M20A family. DapE subfamily. Homodimer. Requires Zn(2+) as cofactor. Co(2+) serves as cofactor.

The enzyme catalyses N-succinyl-(2S,6S)-2,6-diaminopimelate + H2O = (2S,6S)-2,6-diaminopimelate + succinate. It functions in the pathway amino-acid biosynthesis; L-lysine biosynthesis via DAP pathway; LL-2,6-diaminopimelate from (S)-tetrahydrodipicolinate (succinylase route): step 3/3. Its function is as follows. Catalyzes the hydrolysis of N-succinyl-L,L-diaminopimelic acid (SDAP), forming succinate and LL-2,6-diaminopimelate (DAP), an intermediate involved in the bacterial biosynthesis of lysine and meso-diaminopimelic acid, an essential component of bacterial cell walls. This is Succinyl-diaminopimelate desuccinylase from Stenotrophomonas maltophilia (strain R551-3).